The sequence spans 527 residues: Ribosomal protein S6 kinase beta-1 (527 aa).

The interval 1-54 is disordered; that stretch reads MRRRRRRDGFYPAPDFRDREAEDMAGVFDIDLDQPEDAGSEDELEEGGQLNESM. The TOS motif motif lies at 28-32; the sequence is FDIDL. Residues 30-46 are compositionally biased toward acidic residues; it reads IDLDQPEDAGSEDELEE. The Protein kinase domain occupies 91–352; it reads FELLRVLGKG…AGEVQAHPFF (262 aa). Residues 97–105 and K123 each bind ATP; that span reads LGKGGYGKV. D218 (proton acceptor) is an active-site residue. The residue at position 252 (T252) is a Phosphothreonine; by PDPK1. The AGC-kinase C-terminal domain occupies 353 to 423; the sequence is RHINWEELLA…VAPSVLESVK (71 aa). Position 394 is a phosphoserine (S394). Position 412 is a phosphothreonine; by MTOR, NEK6 and NEK7 (T412). The tract at residues 424–527 is autoinhibitory domain; the sequence is EKFSFEPKIR…PEHLRMNLEL (104 aa). 2 positions are modified to phosphoserine: S434 and S441. T444 is subject to Phosphothreonine. Residues S447 and S452 each carry the phosphoserine modification. At K516 the chain carries N6-acetyllysine.

The protein belongs to the protein kinase superfamily. AGC Ser/Thr protein kinase family. S6 kinase subfamily. As to quaternary structure, interacts with PPP1R9A/neurabin-1. Interacts with RPTOR. Interacts with IRS1. Interacts with EIF3B and EIF3C. Interacts with TRAF4. Interacts with POLDIP3. Interacts (via N-terminus) with IER5. In terms of processing, phosphorylation at Thr-412 is regulated by mTORC1. The phosphorylation at this site is maintained by an agonist-dependent autophosphorylation mechanism. Activated by phosphorylation at Thr-252 by PDPK1. Dephosphorylation by PPP1CC at Thr-412 in mitochondrion.

It is found in the cytoplasm. The protein resides in the synapse. The protein localises to the synaptosome. Its subcellular location is the mitochondrion outer membrane. It localises to the mitochondrion. It carries out the reaction L-seryl-[protein] + ATP = O-phospho-L-seryl-[protein] + ADP + H(+). It catalyses the reaction L-threonyl-[protein] + ATP = O-phospho-L-threonyl-[protein] + ADP + H(+). With respect to regulation, inactivated by binding to URI1. Activation requires multiple phosphorylation events on serine/threonine residues. Activation appears to be first mediated by phosphorylation of multiple sites in the autoinhibitory domain, which facilitates phosphorylation at Thr-412, disrupting the autoinhibitory mechanism and allowing phosphorylation of Thr-252 by PDPK1. The active conformation of the kinase is believed to be stabilized by a mechanism involving three conserved phosphorylation sites located in the kinase domain activation loop (Thr-252) and in the AGC-kinase C-terminal domain (Ser-394 in the middle of the tail/linker region and Thr-412 within a hydrophobic motif at its end). Activated by mTORC1; isoform Alpha I and isoform Alpha II are sensitive to rapamycin, which inhibits activating phosphorylation at Thr-412. Activated by PDPK1. In terms of biological role, serine/threonine-protein kinase that acts downstream of mTOR signaling in response to growth factors and nutrients to promote cell proliferation, cell growth and cell cycle progression. Regulates protein synthesis through phosphorylation of EIF4B, RPS6 and EEF2K, and contributes to cell survival by repressing the pro-apoptotic function of BAD. Under conditions of nutrient depletion, the inactive form associates with the EIF3 translation initiation complex. Upon mitogenic stimulation, phosphorylation by the mechanistic target of rapamycin complex 1 (mTORC1) leads to dissociation from the EIF3 complex and activation. The active form then phosphorylates and activates several substrates in the pre-initiation complex, including the EIF2B complex and the cap-binding complex component EIF4B. Also controls translation initiation by phosphorylating a negative regulator of EIF4A, PDCD4, targeting it for ubiquitination and subsequent proteolysis. Promotes initiation of the pioneer round of protein synthesis by phosphorylating POLDIP3/SKAR. In response to IGF1, activates translation elongation by phosphorylating EEF2 kinase (EEF2K), which leads to its inhibition and thus activation of EEF2. Also plays a role in feedback regulation of mTORC2 by mTORC1 by phosphorylating MAPKAP1/SIN1, MTOR and RICTOR, resulting in the inhibition of mTORC2 and AKT1 signaling. Also involved in feedback regulation of mTORC1 and mTORC2 by phosphorylating DEPTOR. Mediates cell survival by phosphorylating the pro-apoptotic protein BAD and suppressing its pro-apoptotic function. Phosphorylates mitochondrial URI1 leading to dissociation of a URI1-PPP1CC complex. The free mitochondrial PPP1CC can then dephosphorylate RPS6KB1 at Thr-412, which is proposed to be a negative feedback mechanism for the RPS6KB1 anti-apoptotic function. Mediates TNF-alpha-induced insulin resistance by phosphorylating IRS1 at multiple serine residues, resulting in accelerated degradation of IRS1. In cells lacking functional TSC1-2 complex, constitutively phosphorylates and inhibits GSK3B. May be involved in cytoskeletal rearrangement through binding to neurabin. Phosphorylates and activates the pyrimidine biosynthesis enzyme CAD, downstream of MTOR. Following activation by mTORC1, phosphorylates EPRS and thereby plays a key role in fatty acid uptake by adipocytes and also most probably in interferon-gamma-induced translation inhibition. The protein is Ribosomal protein S6 kinase beta-1 (RPS6KB1) of Bos taurus (Bovine).